A 338-amino-acid chain; its full sequence is Adenylosuccinate synthetase (338 aa).

GTP-binding positions include 12–18 (GDEGKGK) and 42–44 (GHT). D13 (proton acceptor) is an active-site residue. Residues D13 and G42 each coordinate Mg(2+). IMP contacts are provided by residues 13–16 (DEGK), 40–43 (NAGH), T127, R141, Q179, T194, and R256. The active-site Proton donor is the H43. A substrate-binding site is contributed by 252–258 (TVTGRRR). GTP-binding positions include R258, 284 to 286 (CLD), and 324 to 326 (STG).

The protein belongs to the adenylosuccinate synthetase family. Homodimer. Mg(2+) serves as cofactor.

The protein resides in the cytoplasm. It carries out the reaction IMP + L-aspartate + GTP = N(6)-(1,2-dicarboxyethyl)-AMP + GDP + phosphate + 2 H(+). The protein operates within purine metabolism; AMP biosynthesis via de novo pathway; AMP from IMP: step 1/2. In terms of biological role, plays an important role in the de novo pathway of purine nucleotide biosynthesis. Catalyzes the first committed step in the biosynthesis of AMP from IMP. The chain is Adenylosuccinate synthetase from Methanococcus maripaludis (strain DSM 14266 / JCM 13030 / NBRC 101832 / S2 / LL).